Here is a 189-residue protein sequence, read N- to C-terminus: Protein seele (189 aa).

An N-terminal signal peptide occupies residues Met-1–Gly-17. The Saposin B-type domain maps to Arg-23–Pro-176. 3 disulfide bridges follow: Cys-27–Cys-172, Cys-30–Cys-165, and Cys-85–Cys-136. Residues Lys-186–Leu-189 carry the Prevents secretion from ER motif.

The protein belongs to the canopy family.

Its subcellular location is the endoplasmic reticulum. Involved in embryonic dorsal-ventral patterning which is generated by a series of serine protease processing events where gd processes snk which cleaves ea which then processes spz into the activating ligand for the Toll receptor. Required during this process for the secretion of ea from the developing embryo into the perivitelline space and for ea processing. The protein is Protein seele of Drosophila melanogaster (Fruit fly).